A 150-amino-acid polypeptide reads, in one-letter code: Ribonuclease H (150 aa).

One can recognise an RNase H type-1 domain in the interval 1 to 141 (MKSIEVHTDG…VDVLARNQAT (141 aa)). Positions 9, 47, 69, and 133 each coordinate Mg(2+).

This sequence belongs to the RNase H family. In terms of assembly, monomer. Mg(2+) serves as cofactor.

It is found in the cytoplasm. It carries out the reaction Endonucleolytic cleavage to 5'-phosphomonoester.. Its function is as follows. Endonuclease that specifically degrades the RNA of RNA-DNA hybrids. The protein is Ribonuclease H of Xanthomonas oryzae pv. oryzae (strain MAFF 311018).